Here is a 306-residue protein sequence, read N- to C-terminus: tRNA pseudouridine synthase B (306 aa).

D47 functions as the Nucleophile in the catalytic mechanism.

This sequence belongs to the pseudouridine synthase TruB family. Type 1 subfamily.

It carries out the reaction uridine(55) in tRNA = pseudouridine(55) in tRNA. Functionally, responsible for synthesis of pseudouridine from uracil-55 in the psi GC loop of transfer RNAs. This is tRNA pseudouridine synthase B from Neisseria gonorrhoeae (strain NCCP11945).